The sequence spans 319 residues: Ribonucleoside-diphosphate reductase 2 subunit beta (319 aa).

The Fe cation site is built by Asp-67, Glu-98, and His-101. Tyr-105 is a catalytic residue. Glu-158, Glu-192, and His-195 together coordinate Fe cation.

This sequence belongs to the ribonucleoside diphosphate reductase small chain family. As to quaternary structure, tetramer of two alpha and two beta subunits. It depends on Fe cation as a cofactor.

It carries out the reaction a 2'-deoxyribonucleoside 5'-diphosphate + [thioredoxin]-disulfide + H2O = a ribonucleoside 5'-diphosphate + [thioredoxin]-dithiol. Functionally, provides the precursors necessary for DNA synthesis. Catalyzes the biosynthesis of deoxyribonucleotides from the corresponding ribonucleotides. R2F contains the tyrosyl radical required for catalysis. The chain is Ribonucleoside-diphosphate reductase 2 subunit beta (nrdF) from Escherichia coli (strain K12).